The sequence spans 49 residues: Large ribosomal subunit protein bL33A (49 aa).

The disordered stretch occupies residues 21–49; it reads KNKRNNPERVEMKKYCSRDNKHTLHRETK. Basic and acidic residues predominate over residues 25–49; the sequence is NNPERVEMKKYCSRDNKHTLHRETK.

It belongs to the bacterial ribosomal protein bL33 family.

The sequence is that of Large ribosomal subunit protein bL33A from Staphylococcus epidermidis (strain ATCC 35984 / DSM 28319 / BCRC 17069 / CCUG 31568 / BM 3577 / RP62A).